Here is a 372-residue protein sequence, read N- to C-terminus: G patch domain and ankyrin repeat-containing protein 1 (372 aa).

The interval 74 to 110 (DSSSSKPQRAEPMRERKKKRRRVTREPAAAGVPRQGR) is disordered. 2 ANK repeats span residues 124–155 (LAAQNGDLTELRRLLEPQEAGGAGGNINARDA) and 156–186 (FWWTPLMCAARAGQGAAVRYLLGRGAAWVGV). 2 disordered regions span residues 211-233 (RESHGETRSPENQNRSTPSSSQF) and 251-271 (AHLLSLSRRPQPSNLPLGVPT). Residues 220 to 233 (PENQNRSTPSSSQF) are compositionally biased toward polar residues. The G-patch domain maps to 271-317 (TSSPGFRLLLRGGWEPGMGLGPRGEGRANPIPTILKRDQEGLGYRSP). A Glycyl lysine isopeptide (Lys-Gly) (interchain with G-Cter in SUMO2) cross-link involves residue Lys306. Basic and acidic residues-rich tracts occupy residues 330 to 340 (TRAVSGRERVP) and 348 to 357 (RENRRQEEKG). The tract at residues 330-357 (TRAVSGRERVPRVATLSQRENRRQEEKG) is disordered.

The chain is G patch domain and ankyrin repeat-containing protein 1 (Gpank1) from Mus musculus (Mouse).